The chain runs to 420 residues: Gamma-glutamyl phosphate reductase (420 aa).

It belongs to the gamma-glutamyl phosphate reductase family.

It is found in the cytoplasm. The enzyme catalyses L-glutamate 5-semialdehyde + phosphate + NADP(+) = L-glutamyl 5-phosphate + NADPH + H(+). It functions in the pathway amino-acid biosynthesis; L-proline biosynthesis; L-glutamate 5-semialdehyde from L-glutamate: step 2/2. Functionally, catalyzes the NADPH-dependent reduction of L-glutamate 5-phosphate into L-glutamate 5-semialdehyde and phosphate. The product spontaneously undergoes cyclization to form 1-pyrroline-5-carboxylate. The protein is Gamma-glutamyl phosphate reductase of Acidiphilium cryptum (strain JF-5).